The chain runs to 172 residues: Large ribosomal subunit protein uL10 (172 aa).

The protein belongs to the universal ribosomal protein uL10 family. As to quaternary structure, part of the ribosomal stalk of the 50S ribosomal subunit. The N-terminus interacts with L11 and the large rRNA to form the base of the stalk. The C-terminus forms an elongated spine to which L12 dimers bind in a sequential fashion forming a multimeric L10(L12)X complex.

Functionally, forms part of the ribosomal stalk, playing a central role in the interaction of the ribosome with GTP-bound translation factors. This is Large ribosomal subunit protein uL10 from Brucella abortus (strain S19).